The primary structure comprises 299 residues: Telomere repeat-binding factor 2 (299 aa).

One can recognise an HTH myb-type domain in the interval 1-61; it reads MGAPKQKWTP…KWRNISVTAL (61 aa). Positions 28–57 form a DNA-binding region, H-T-H motif; the sequence is WRTILSDTEFSLILKSRSNVDLKDKWRNIS. A disordered region spans residues 93–116; sequence LTNDDERAKPTSPGGSGGGSPRTC. The region spanning 121–189 is the H15 domain; sequence SITSLDKIIF…KIKHKYRFSS (69 aa). Residues 243 to 288 are a coiled coil; it reads EAAEAAARAVAEAEFAITEAEQAAKEAERAEAEAEAAQIFAKAAMK.

It belongs to the histone H1/H5 family. SMH subfamily. As to quaternary structure, forms a homodimer and heterodimers with TRB1 or TRB3. Interacts with TRB1 and TRB3. As to expression, ubiquitous.

Its subcellular location is the nucleus. The protein localises to the nucleolus. It is found in the chromosome. In terms of biological role, binds preferentially double-stranded telomeric repeats, but it can also bind to the single G-rich telomeric strand. The protein is Telomere repeat-binding factor 2 (TRB2) of Arabidopsis thaliana (Mouse-ear cress).